We begin with the raw amino-acid sequence, 565 residues long: Sulfite reductase [NADPH] hemoprotein beta-component (565 aa).

[4Fe-4S] cluster is bound by residues C429, C435, C474, and C478. C478 provides a ligand contact to siroheme.

Belongs to the nitrite and sulfite reductase 4Fe-4S domain family. Alpha(8)-beta(8). The alpha component is a flavoprotein, the beta component is a hemoprotein. Siroheme serves as cofactor. It depends on [4Fe-4S] cluster as a cofactor.

It catalyses the reaction hydrogen sulfide + 3 NADP(+) + 3 H2O = sulfite + 3 NADPH + 4 H(+). It functions in the pathway sulfur metabolism; hydrogen sulfide biosynthesis; hydrogen sulfide from sulfite (NADPH route): step 1/1. In terms of biological role, component of the sulfite reductase complex that catalyzes the 6-electron reduction of sulfite to sulfide. This is one of several activities required for the biosynthesis of L-cysteine from sulfate. The polypeptide is Sulfite reductase [NADPH] hemoprotein beta-component (Shewanella halifaxensis (strain HAW-EB4)).